The sequence spans 77 residues: Large ribosomal subunit protein uL29 (77 aa).

This sequence belongs to the universal ribosomal protein uL29 family.

This Mycolicibacterium smegmatis (strain ATCC 700084 / mc(2)155) (Mycobacterium smegmatis) protein is Large ribosomal subunit protein uL29.